Reading from the N-terminus, the 564-residue chain is Serine/threonine-protein kinase DBF20 (564 aa).

Residue serine 17 is modified to Phosphoserine. Residues 24 to 62 (LNIPKPTSPQAQYRPARKSENGRLTPGLPRSYKPCDSDD) are disordered. The region spanning 169 to 469 (FQILTQVGQG…FEQVRKMSYF (301 aa)) is the Protein kinase domain. Residues 175-183 (VGQGGYGQV) and lysine 198 each bind ATP. The active-site Proton acceptor is aspartate 292. Serine 366 carries the post-translational modification Phosphoserine. An AGC-kinase C-terminal domain is found at 470-547 (AEINFETLRT…RHRDGKQGSS (78 aa)). Threonine 536 bears the Phosphothreonine mark.

This sequence belongs to the protein kinase superfamily. Ser/Thr protein kinase family.

It catalyses the reaction L-seryl-[protein] + ATP = O-phospho-L-seryl-[protein] + ADP + H(+). It carries out the reaction L-threonyl-[protein] + ATP = O-phospho-L-threonyl-[protein] + ADP + H(+). Its function is as follows. Is probably a Ser/Thr-protein kinase that may function in initiation of DNA synthesis and also in late nuclear division. In Saccharomyces cerevisiae (strain ATCC 204508 / S288c) (Baker's yeast), this protein is Serine/threonine-protein kinase DBF20 (DBF20).